The chain runs to 481 residues: UDP-glycosyltransferase 72E2 (481 aa).

Catalysis depends on His18, which acts as the Proton acceptor. Position 18 (His18) interacts with an anthocyanidin. Asp111 serves as the catalytic Charge relay. 6 residues coordinate UDP-alpha-D-glucose: Ala346, Gln348, His363, Trp366, Ser368, and Glu371. Ala386 provides a ligand contact to an anthocyanidin. 2 residues coordinate UDP-alpha-D-glucose: Glu387 and Gln388.

It belongs to the UDP-glycosyltransferase family. In terms of tissue distribution, expressed in seedlings and roots.

It catalyses the reaction (E)-4-coumarate + UDP-alpha-D-glucose = 4-O-(beta-D-glucosyl)-trans-4-coumarate + UDP + H(+). The enzyme catalyses (E)-coniferol + UDP-alpha-D-glucose = 4-O-(beta-D-glucosyl)-(E)-coniferol + UDP + H(+). The catalysed reaction is (E)-sinapyl alcohol + UDP-alpha-D-glucose = 4-O-(beta-D-glucosyl)-trans-4-sinapoyl alcohol + UDP + H(+). It carries out the reaction (E)-sinapate + UDP-alpha-D-glucose = 4-O-(beta-D-glucosyl)-trans-sinapate + UDP + H(+). It catalyses the reaction (E)-coniferaldehyde + UDP-alpha-D-glucose = 4-O-(beta-D-glucosyl)-4-(E)-coniferyl aldehyde + UDP + H(+). The enzyme catalyses (E)-sinapaldehyde + UDP-alpha-D-glucose = 4-O-(beta-D-glucosyl)-4-trans-sinapoyl aldehyde + UDP + H(+). Involved in the O-glucosylation of monolignols (alcohol monomers of lignin). Glucosylates coniferyl alcohol to form coniferyl alcohol 4-O-glucoside. Glucosylates sinapyl alcohol to form sinapyl alcohol 4-O-glucoside. Glucosylates coniferyl aldehyde to form coniferyl aldehyde 4-O-glucoside. Glucosylates sinapyl aldehyde to form sinapyl aldehyde 4-O-glucoside. Possesses low activity with sinapate and ferulate as substrates. The chain is UDP-glycosyltransferase 72E2 from Arabidopsis thaliana (Mouse-ear cress).